A 443-amino-acid chain; its full sequence is Pyrrolysine--tRNA ligase (443 aa).

Residues 103–177 form a disordered region; sequence VRKAMPKSVA…PAAPVPTSAP (75 aa). Low complexity predominate over residues 131–177; it reads PAPATPVSAPAQAPAPSTGSASATSASAQRMANSAAAPAAPVPTSAP.

The protein belongs to the class-II aminoacyl-tRNA synthetase family.

The protein resides in the cytoplasm. The enzyme catalyses tRNA(Pyl) + L-pyrrolysine + ATP = L-pyrrolysyl-tRNA(Pyl) + AMP + diphosphate. Its function is as follows. Catalyzes the attachment of pyrrolysine to tRNA(Pyl). Pyrrolysine is a lysine derivative encoded by the termination codon UAG. The protein is Pyrrolysine--tRNA ligase of Methanosarcina acetivorans (strain ATCC 35395 / DSM 2834 / JCM 12185 / C2A).